A 254-amino-acid polypeptide reads, in one-letter code: 3-oxo-5-alpha-steroid 4-dehydrogenase 2 (254 aa).

The next 4 membrane-spanning stretches (helical) occupy residues Val-8–Gly-28, Pro-72–Phe-92, Phe-146–Thr-166, and Leu-206–Met-226.

Belongs to the steroid 5-alpha reductase family. In terms of tissue distribution, expressed in high levels in the prostate and many other androgen-sensitive tissues.

The protein localises to the microsome membrane. It is found in the endoplasmic reticulum membrane. It catalyses the reaction a 3-oxo-5alpha-steroid + NADP(+) = a 3-oxo-Delta(4)-steroid + NADPH + H(+). The enzyme catalyses 17beta-hydroxy-5alpha-androstan-3-one + NADP(+) = testosterone + NADPH + H(+). It carries out the reaction 5alpha-pregnane-3,20-dione + NADP(+) = progesterone + NADPH + H(+). In terms of biological role, converts testosterone (T) into 5-alpha-dihydrotestosterone (DHT) and progesterone or corticosterone into their corresponding 5-alpha-3-oxosteroids. It plays a central role in sexual differentiation and androgen physiology. This is 3-oxo-5-alpha-steroid 4-dehydrogenase 2 (Srd5a2) from Rattus norvegicus (Rat).